The chain runs to 273 residues: Ribosomal RNA small subunit methyltransferase A (273 aa).

The S-adenosyl-L-methionine site is built by N18, L20, G45, E66, D91, and N113.

This sequence belongs to the class I-like SAM-binding methyltransferase superfamily. rRNA adenine N(6)-methyltransferase family. RsmA subfamily.

The protein localises to the cytoplasm. The catalysed reaction is adenosine(1518)/adenosine(1519) in 16S rRNA + 4 S-adenosyl-L-methionine = N(6)-dimethyladenosine(1518)/N(6)-dimethyladenosine(1519) in 16S rRNA + 4 S-adenosyl-L-homocysteine + 4 H(+). In terms of biological role, specifically dimethylates two adjacent adenosines (A1518 and A1519) in the loop of a conserved hairpin near the 3'-end of 16S rRNA in the 30S particle. May play a critical role in biogenesis of 30S subunits. In Enterobacter sp. (strain 638), this protein is Ribosomal RNA small subunit methyltransferase A.